The chain runs to 888 residues: Rab GTPase-activating protein eat-17 (888 aa).

Positions 41-60 (RSNSNSTSSPRNSPSQLSPP) are enriched in low complexity. Disordered regions lie at residues 41-87 (RSNS…CETG) and 104-135 (LNKS…HSPE). Positions 114 to 123 (SVASKKTGSS) are enriched in polar residues. Basic and acidic residues predominate over residues 124 to 133 (ESRKGAREHS). Residues 173–357 (GIPQHFRMIA…RIMDCFLVEG (185 aa)) form the Rab-GAP TBC domain. Residues 631–654 (ASIEKESTSEAHSTQQQPSPPLTS) are disordered. A coiled-coil region spans residues 694–770 (EADTLAELKE…ESEFNEGRIN (77 aa)). Positions 854-888 (LAEEGSATETDELRPKELNDGNDTTDSGVQLSDSH) are disordered. A compositionally biased stretch (polar residues) spans 874-888 (GNDTTDSGVQLSDSH).

May interact with rab-6.2 (in GTP-bound form). Highly expressed in the terminal bulb muscles, pharyngeal muscle, in intestine and vulva.

In terms of biological role, rab GTPase activating protein for the small GTPase rab-6.2. Required for grinder formation, which is the feeding organ that breaks down food. In Caenorhabditis elegans, this protein is Rab GTPase-activating protein eat-17.